A 226-amino-acid polypeptide reads, in one-letter code: PKHD-type hydroxylase Nwi_0701 (226 aa).

Residues 78 to 178 enclose the Fe2OG dioxygenase domain; it reads KVLPPRFNRY…RLAAFFWTQS (101 aa). Fe cation is bound by residues His-96, Asp-98, and His-159. Residue Arg-169 coordinates 2-oxoglutarate.

It depends on Fe(2+) as a cofactor. Requires L-ascorbate as cofactor.

The sequence is that of PKHD-type hydroxylase Nwi_0701 from Nitrobacter winogradskyi (strain ATCC 25391 / DSM 10237 / CIP 104748 / NCIMB 11846 / Nb-255).